The sequence spans 354 residues: Neutral protease 2 homolog BCIN_12g06300 (354 aa).

An N-terminal signal peptide occupies residues 1 to 19 (MRSFSKILAVASLAAIANS). Residues 20–179 (AVLKRDNNVL…PSSIDRRTVL (160 aa)) constitute a propeptide that is removed on maturation. 2 cysteine pairs are disulfide-bonded: C183-C255 and C262-C280. H305 is a Zn(2+) binding site. The active site involves E306. The Zn(2+) site is built by H309 and D320.

This sequence belongs to the peptidase M35 family. Zn(2+) is required as a cofactor.

Its subcellular location is the secreted. The enzyme catalyses Preferential cleavage of bonds with hydrophobic residues in P1'. Also 3-Asn-|-Gln-4 and 8-Gly-|-Ser-9 bonds in insulin B chain.. In terms of biological role, secreted metalloproteinase that allows assimilation of proteinaceous substrates. Shows high activities on basic nuclear substrates such as histone and protamine. The chain is Neutral protease 2 homolog BCIN_12g06300 from Botryotinia fuckeliana (strain B05.10) (Noble rot fungus).